A 320-amino-acid polypeptide reads, in one-letter code: tRNA N6-adenosine threonylcarbamoyltransferase (320 aa).

Fe cation contacts are provided by His113 and His117. Substrate contacts are provided by residues 143–147 (VVSGG), Asp176, Gly189, Asp193, and Asn281. Asp305 is a binding site for Fe cation.

Belongs to the KAE1 / TsaD family. Fe(2+) serves as cofactor.

Its subcellular location is the cytoplasm. It catalyses the reaction L-threonylcarbamoyladenylate + adenosine(37) in tRNA = N(6)-L-threonylcarbamoyladenosine(37) in tRNA + AMP + H(+). In terms of biological role, required for the formation of a threonylcarbamoyl group on adenosine at position 37 (t(6)A37) in tRNAs that read codons beginning with adenine. Is involved in the transfer of the threonylcarbamoyl moiety of threonylcarbamoyl-AMP (TC-AMP) to the N6 group of A37, together with TsaE and TsaB. TsaD likely plays a direct catalytic role in this reaction. The sequence is that of tRNA N6-adenosine threonylcarbamoyltransferase from Mycoplasmoides gallisepticum (strain R(low / passage 15 / clone 2)) (Mycoplasma gallisepticum).